The sequence spans 152 residues: Endoribonuclease YbeY (152 aa).

Zn(2+) contacts are provided by His116, His120, and His126.

Belongs to the endoribonuclease YbeY family. Requires Zn(2+) as cofactor.

It is found in the cytoplasm. In terms of biological role, single strand-specific metallo-endoribonuclease involved in late-stage 70S ribosome quality control and in maturation of the 3' terminus of the 16S rRNA. This chain is Endoribonuclease YbeY, found in Mycoplasma mobile (strain ATCC 43663 / 163K / NCTC 11711) (Mesomycoplasma mobile).